Here is a 287-residue protein sequence, read N- to C-terminus: ATP synthase gamma chain (287 aa).

The protein belongs to the ATPase gamma chain family. As to quaternary structure, F-type ATPases have 2 components, CF(1) - the catalytic core - and CF(0) - the membrane proton channel. CF(1) has five subunits: alpha(3), beta(3), gamma(1), delta(1), epsilon(1). CF(0) has three main subunits: a, b and c.

It localises to the cell inner membrane. Produces ATP from ADP in the presence of a proton gradient across the membrane. The gamma chain is believed to be important in regulating ATPase activity and the flow of protons through the CF(0) complex. In Pectobacterium carotovorum subsp. carotovorum (strain PC1), this protein is ATP synthase gamma chain.